A 475-amino-acid chain; its full sequence is Cytosolic non-specific dipeptidase (475 aa).

The residue at position 9 (K9) is an N6-acetyllysine. S58 is subject to Phosphoserine. H99 is a Mn(2+) binding site. Residue D101 is part of the active site. Position 132 (D132) interacts with Mn(2+). The Proton acceptor role is filled by E166. Substrate contacts are provided by residues 166 to 167 (EE), D195, H228, T330, R343, S417, and H445. Residues E167 and D195 each coordinate Mn(2+). H445 is a Mn(2+) binding site.

The protein belongs to the peptidase M20A family. As to quaternary structure, homodimer. It depends on Mn(2+) as a cofactor.

It is found in the cytoplasm. It catalyses the reaction Hydrolysis of dipeptides, preferentially hydrophobic dipeptides including prolyl amino acids.. It carries out the reaction L-threonyl-L-threonine + H2O = 2 L-threonine. The catalysed reaction is L-threonyl-L-serine + H2O = L-threonine + L-serine. The enzyme catalyses L-seryl-L-threonine + H2O = L-threonine + L-serine. It catalyses the reaction L-cysteinylglycine + H2O = L-cysteine + glycine. It carries out the reaction L-alanyl-L-cysteine + H2O = L-cysteine + L-alanine. The catalysed reaction is (S)-lactate + L-phenylalanine = N-[(S)-lactoyl]-L-phenylalanine + H2O. Functionally, catalyzes the peptide bond hydrolysis in dipeptides, displaying a non-redundant activity toward threonyl dipeptides. Mediates threonyl dipeptide catabolism in a tissue-specific way. Has high dipeptidase activity toward cysteinylglycine, an intermediate metabolite in glutathione metabolism. Metabolizes N-lactoyl-amino acids, both through hydrolysis to form lactic acid and amino acids, as well as through their formation by reverse proteolysis. Plays a role in the regulation of cell cycle arrest and apoptosis. The protein is Cytosolic non-specific dipeptidase (CNDP2) of Bos taurus (Bovine).